The sequence spans 298 residues: Glutamyl-Q tRNA(Asp) synthetase (298 aa).

L-glutamate is bound by residues 9 to 13 (RFAPS) and glutamate 45. The short motif at 12–22 (PSPSGELHFGS) is the 'HIGH' region element. Residues cysteine 101, cysteine 103, tyrosine 115, and cysteine 119 each coordinate Zn(2+). 2 residues coordinate L-glutamate: tyrosine 172 and arginine 190. Residues 228–232 (KLSKQ) carry the 'KMSKS' region motif. An ATP-binding site is contributed by lysine 231.

It belongs to the class-I aminoacyl-tRNA synthetase family. GluQ subfamily. It depends on Zn(2+) as a cofactor.

Functionally, catalyzes the tRNA-independent activation of glutamate in presence of ATP and the subsequent transfer of glutamate onto a tRNA(Asp). Glutamate is transferred on the 2-amino-5-(4,5-dihydroxy-2-cyclopenten-1-yl) moiety of the queuosine in the wobble position of the QUC anticodon. The protein is Glutamyl-Q tRNA(Asp) synthetase of Salmonella typhimurium (strain LT2 / SGSC1412 / ATCC 700720).